Consider the following 172-residue polypeptide: NADH-quinone oxidoreductase subunit B (172 aa).

Residues cysteine 46, cysteine 47, cysteine 111, and cysteine 141 each coordinate [4Fe-4S] cluster.

This sequence belongs to the complex I 20 kDa subunit family. NDH-1 is composed of 14 different subunits. Subunits NuoB, C, D, E, F, and G constitute the peripheral sector of the complex. [4Fe-4S] cluster is required as a cofactor.

It localises to the cell membrane. The enzyme catalyses a quinone + NADH + 5 H(+)(in) = a quinol + NAD(+) + 4 H(+)(out). Its function is as follows. NDH-1 shuttles electrons from NADH, via FMN and iron-sulfur (Fe-S) centers, to quinones in the respiratory chain. The immediate electron acceptor for the enzyme in this species is believed to be a menaquinone. Couples the redox reaction to proton translocation (for every two electrons transferred, four hydrogen ions are translocated across the cytoplasmic membrane), and thus conserves the redox energy in a proton gradient. The chain is NADH-quinone oxidoreductase subunit B from Bacillus mycoides (strain KBAB4) (Bacillus weihenstephanensis).